The chain runs to 247 residues: Sortase A (247 aa).

Residues 1–9 (MRNKKKLHG) lie on the Cytoplasmic side of the membrane. The chain crosses the membrane as a helical span at residues 10–30 (FFNFVRWLLVVLLIIVGLALV). The Extracellular portion of the chain corresponds to 31–247 (FNKPIRNAFI…FSKKYNQINL (217 aa)). The active-site Proton donor/acceptor is His140. Cys206 (acyl-thioester intermediate) is an active-site residue.

This sequence belongs to the bacterial sortase family. Class A subfamily.

The protein localises to the cell membrane. Transpeptidase that anchors surface proteins to the cell wall. Recognizes and modifies its substrate by proteolytic cleavage of a C-terminal sorting signal. Following cleavage, a covalent intermediate is formed via a thioester bond between the sortase and its substrate, which is then transferred and covalently attached to the cell wall. This sortase recognizes a Leu-Pro-x-Thr-Gly (LPXTG) motif, which is cleaved by the sortase between the threonine and glycine residues. Essential for adherence to eukaryotic cells and for binding to fibronectin and fibrinogen. The protein is Sortase A of Streptococcus agalactiae serotype III (strain NEM316).